We begin with the raw amino-acid sequence, 283 residues long: 2,3,4,5-tetrahydropyridine-2,6-dicarboxylate N-succinyltransferase (283 aa).

2 residues coordinate substrate: Arg-107 and Asp-144.

It belongs to the transferase hexapeptide repeat family. As to quaternary structure, homotrimer.

The protein localises to the cytoplasm. It carries out the reaction (S)-2,3,4,5-tetrahydrodipicolinate + succinyl-CoA + H2O = (S)-2-succinylamino-6-oxoheptanedioate + CoA. The protein operates within amino-acid biosynthesis; L-lysine biosynthesis via DAP pathway; LL-2,6-diaminopimelate from (S)-tetrahydrodipicolinate (succinylase route): step 1/3. The polypeptide is 2,3,4,5-tetrahydropyridine-2,6-dicarboxylate N-succinyltransferase (Rhodospirillum rubrum (strain ATCC 11170 / ATH 1.1.1 / DSM 467 / LMG 4362 / NCIMB 8255 / S1)).